Here is an 87-residue protein sequence, read N- to C-terminus: Small ribosomal subunit protein bS20 (87 aa).

This sequence belongs to the bacterial ribosomal protein bS20 family.

In terms of biological role, binds directly to 16S ribosomal RNA. The sequence is that of Small ribosomal subunit protein bS20 from Corynebacterium urealyticum (strain ATCC 43042 / DSM 7109).